A 217-amino-acid chain; its full sequence is Adenylate kinase (217 aa).

Position 10–15 (10–15) interacts with ATP; the sequence is GAGKGT. Residues 30–59 are NMP; the sequence is STGDMLRAAVKAESELGLQVKEVMASGGLV. Residues Thr-31, Arg-36, 57-59, 85-88, and Gln-92 contribute to the AMP site; these read GLV and GFPR. The LID stretch occupies residues 122 to 159; sequence GRRVHEGSGRIYHVKYDPPKVEGKDDETGEALIQREDD. ATP-binding positions include Arg-123 and 132–133; that span reads IY. 2 residues coordinate AMP: Arg-156 and Arg-167. ATP is bound at residue Gly-203.

The protein belongs to the adenylate kinase family. In terms of assembly, monomer.

The protein resides in the cytoplasm. The catalysed reaction is AMP + ATP = 2 ADP. It participates in purine metabolism; AMP biosynthesis via salvage pathway; AMP from ADP: step 1/1. Functionally, catalyzes the reversible transfer of the terminal phosphate group between ATP and AMP. Plays an important role in cellular energy homeostasis and in adenine nucleotide metabolism. The chain is Adenylate kinase from Marinobacter nauticus (strain ATCC 700491 / DSM 11845 / VT8) (Marinobacter aquaeolei).